The chain runs to 51 residues: Epididymal sperm protein E (51 aa).

The segment at 8–39 (CVRCRRKTPSFNSKTVTFRNKRRAIRSHCAYC) is a zinc-finger region.

In terms of tissue distribution, sperm.

It is found in the nucleus. This Sepia officinalis (Common cuttlefish) protein is Epididymal sperm protein E.